Reading from the N-terminus, the 120-residue chain is NAD(P)H-quinone oxidoreductase subunit 3, chloroplastic (120 aa).

Helical transmembrane passes span 9–29, 64–84, and 88–108; these read IFWT…LISG, MFAL…PWAM, and VLGV…IVGS.

Belongs to the complex I subunit 3 family. NDH is composed of at least 16 different subunits, 5 of which are encoded in the nucleus.

It is found in the plastid. It localises to the chloroplast thylakoid membrane. The catalysed reaction is a plastoquinone + NADH + (n+1) H(+)(in) = a plastoquinol + NAD(+) + n H(+)(out). The enzyme catalyses a plastoquinone + NADPH + (n+1) H(+)(in) = a plastoquinol + NADP(+) + n H(+)(out). In terms of biological role, NDH shuttles electrons from NAD(P)H:plastoquinone, via FMN and iron-sulfur (Fe-S) centers, to quinones in the photosynthetic chain and possibly in a chloroplast respiratory chain. The immediate electron acceptor for the enzyme in this species is believed to be plastoquinone. Couples the redox reaction to proton translocation, and thus conserves the redox energy in a proton gradient. In Piper cenocladum (Ant piper), this protein is NAD(P)H-quinone oxidoreductase subunit 3, chloroplastic.